A 357-amino-acid chain; its full sequence is NADH-quinone oxidoreductase subunit H (357 aa).

8 consecutive transmembrane segments (helical) span residues 25 to 45 (ILII…VVAY), 94 to 114 (IYLF…VWVV), 130 to 150 (LLYV…AGWA), 166 to 186 (LLVS…MIAG), 201 to 221 (IIYW…ISAL), 254 to 274 (FFLA…VMFF), 294 to 314 (VPGI…YLWV), and 329 to 349 (LSWK…ALMT).

The protein belongs to the complex I subunit 1 family. As to quaternary structure, NDH-1 is composed of 14 different subunits. Subunits NuoA, H, J, K, L, M, N constitute the membrane sector of the complex.

It is found in the cell inner membrane. It carries out the reaction a quinone + NADH + 5 H(+)(in) = a quinol + NAD(+) + 4 H(+)(out). Functionally, NDH-1 shuttles electrons from NADH, via FMN and iron-sulfur (Fe-S) centers, to quinones in the respiratory chain. The immediate electron acceptor for the enzyme in this species is believed to be ubiquinone. Couples the redox reaction to proton translocation (for every two electrons transferred, four hydrogen ions are translocated across the cytoplasmic membrane), and thus conserves the redox energy in a proton gradient. This subunit may bind ubiquinone. This Ruthia magnifica subsp. Calyptogena magnifica protein is NADH-quinone oxidoreductase subunit H.